We begin with the raw amino-acid sequence, 345 residues long: N-acetyl-gamma-glutamyl-phosphate reductase (345 aa).

Residue C149 is part of the active site.

It belongs to the NAGSA dehydrogenase family. Type 1 subfamily.

It localises to the cytoplasm. The catalysed reaction is N-acetyl-L-glutamate 5-semialdehyde + phosphate + NADP(+) = N-acetyl-L-glutamyl 5-phosphate + NADPH + H(+). It participates in amino-acid biosynthesis; L-arginine biosynthesis; N(2)-acetyl-L-ornithine from L-glutamate: step 3/4. Catalyzes the NADPH-dependent reduction of N-acetyl-5-glutamyl phosphate to yield N-acetyl-L-glutamate 5-semialdehyde. The polypeptide is N-acetyl-gamma-glutamyl-phosphate reductase (Bacillus thuringiensis subsp. konkukian (strain 97-27)).